The sequence spans 321 residues: tRNA U34 carboxymethyltransferase (321 aa).

Carboxy-S-adenosyl-L-methionine-binding positions include Lys-90, Trp-104, Lys-109, Gly-129, 151–153 (DPT), 180–181 (IE), Met-195, Tyr-199, and Arg-314.

The protein belongs to the class I-like SAM-binding methyltransferase superfamily. CmoB family. Homotetramer.

It carries out the reaction carboxy-S-adenosyl-L-methionine + 5-hydroxyuridine(34) in tRNA = 5-carboxymethoxyuridine(34) in tRNA + S-adenosyl-L-homocysteine + H(+). Catalyzes carboxymethyl transfer from carboxy-S-adenosyl-L-methionine (Cx-SAM) to 5-hydroxyuridine (ho5U) to form 5-carboxymethoxyuridine (cmo5U) at position 34 in tRNAs. The sequence is that of tRNA U34 carboxymethyltransferase from Haemophilus influenzae (strain ATCC 51907 / DSM 11121 / KW20 / Rd).